Reading from the N-terminus, the 105-residue chain is U2-lycotoxin-Ls1d (105 aa).

Residues 1-17 (MIKYVLISALLVVAVYS) form the signal peptide. Positions 18-41 (FTIEDNEDALLEEAEDELDTEEER) are excised as a propeptide. 4 cysteine pairs are disulfide-bonded: Cys-51-Cys-67, Cys-58-Cys-97, Cys-60-Cys-83, and Cys-69-Cys-81.

The protein belongs to the neurotoxin 04 (omega-agtx) family. 01 (type I omega-agtx) subfamily. Expressed by the venom gland.

It is found in the secreted. Its function is as follows. Insecticidal to house crickets. It induces an excitatory slow-onset impact that leads to irreversible spastic paralysis. It also modifies human voltage-gated potassium channel Kv1.5/KCNA5. Most likely, it binds to the voltage-sensing domain of the channel, suggesting it does not block the pore but prevents its opening at physiological membrane potentials. The recombinant peptide binds to the channel in an irreversible manner and slows down the hKv1.5 current activation kinetics. It is not toxic to mice, when intracranially injected (at 0.5 ug/g mouse). The chain is U2-lycotoxin-Ls1d from Lycosa singoriensis (Wolf spider).